A 154-amino-acid chain; its full sequence is Myoglobin (154 aa).

One can recognise a Globin domain in the interval 2 to 148; that stretch reads GLSDGEWHLV…FRNDIAAKYK (147 aa). The residue at position 4 (S4) is a Phosphoserine. Residue H65 coordinates nitrite. H65 is an O2 binding site. Position 68 is a phosphothreonine (T68). H94 serves as a coordination point for heme b.

It belongs to the globin family. Monomeric.

The protein resides in the cytoplasm. Its subcellular location is the sarcoplasm. The catalysed reaction is Fe(III)-heme b-[protein] + nitric oxide + H2O = Fe(II)-heme b-[protein] + nitrite + 2 H(+). It catalyses the reaction H2O2 + AH2 = A + 2 H2O. Functionally, monomeric heme protein which primary function is to store oxygen and facilitate its diffusion within muscle tissues. Reversibly binds oxygen through a pentacoordinated heme iron and enables its timely and efficient release as needed during periods of heightened demand. Depending on the oxidative conditions of tissues and cells, and in addition to its ability to bind oxygen, it also has a nitrite reductase activity whereby it regulates the production of bioactive nitric oxide. Under stress conditions, like hypoxia and anoxia, it also protects cells against reactive oxygen species thanks to its pseudoperoxidase activity. The sequence is that of Myoglobin (MB) from Halichoerus grypus (Gray seal).